The following is a 153-amino-acid chain: uncharacterized protein (153 aa).

The tract at residues 17-78 is disordered; that stretch reads IYIHTPHPHP…HTTLSNLSLN (62 aa). Over residues 22 to 38 the composition is skewed to basic residues; sequence PHPHPHPHPHTPTHTHP.

This is an uncharacterized protein from Saccharomyces cerevisiae (strain ATCC 204508 / S288c) (Baker's yeast).